The primary structure comprises 286 residues: ATP synthase gamma chain (286 aa).

Belongs to the ATPase gamma chain family. As to quaternary structure, F-type ATPases have 2 components, CF(1) - the catalytic core - and CF(0) - the membrane proton channel. CF(1) has five subunits: alpha(3), beta(3), gamma(1), delta(1), epsilon(1). CF(0) has three main subunits: a, b and c.

It localises to the cell inner membrane. Functionally, produces ATP from ADP in the presence of a proton gradient across the membrane. The gamma chain is believed to be important in regulating ATPase activity and the flow of protons through the CF(0) complex. In Shewanella putrefaciens (strain CN-32 / ATCC BAA-453), this protein is ATP synthase gamma chain.